A 313-amino-acid polypeptide reads, in one-letter code: Ribosomal RNA small subunit methyltransferase H (313 aa).

S-adenosyl-L-methionine-binding positions include 51–53, aspartate 71, phenylalanine 98, aspartate 119, and glutamine 126; that span reads GGH. The tract at residues 293–313 is disordered; sequence EEQRANPRSRSARLRVAERVS.

This sequence belongs to the methyltransferase superfamily. RsmH family.

It is found in the cytoplasm. The enzyme catalyses cytidine(1402) in 16S rRNA + S-adenosyl-L-methionine = N(4)-methylcytidine(1402) in 16S rRNA + S-adenosyl-L-homocysteine + H(+). Specifically methylates the N4 position of cytidine in position 1402 (C1402) of 16S rRNA. The sequence is that of Ribosomal RNA small subunit methyltransferase H from Roseiflexus sp. (strain RS-1).